Here is a 91-residue protein sequence, read N- to C-terminus: Large ribosomal subunit protein bL31B (91 aa).

It belongs to the bacterial ribosomal protein bL31 family. Type B subfamily. Part of the 50S ribosomal subunit.

The sequence is that of Large ribosomal subunit protein bL31B from Mycolicibacterium vanbaalenii (strain DSM 7251 / JCM 13017 / BCRC 16820 / KCTC 9966 / NRRL B-24157 / PYR-1) (Mycobacterium vanbaalenii).